A 157-amino-acid polypeptide reads, in one-letter code: Protein NrdI (157 aa).

It belongs to the NrdI family.

Probably involved in ribonucleotide reductase function. This Mycoplasma capricolum subsp. capricolum (strain California kid / ATCC 27343 / NCTC 10154) protein is Protein NrdI.